Here is a 257-residue protein sequence, read N- to C-terminus: 1-(5-phosphoribosyl)-5-[(5-phosphoribosylamino)methylideneamino] imidazole-4-carboxamide isomerase (257 aa).

The active-site Proton acceptor is the Asp-8. The active-site Proton donor is Asp-131.

The protein belongs to the HisA/HisF family.

Its subcellular location is the cytoplasm. The catalysed reaction is 1-(5-phospho-beta-D-ribosyl)-5-[(5-phospho-beta-D-ribosylamino)methylideneamino]imidazole-4-carboxamide = 5-[(5-phospho-1-deoxy-D-ribulos-1-ylimino)methylamino]-1-(5-phospho-beta-D-ribosyl)imidazole-4-carboxamide. The protein operates within amino-acid biosynthesis; L-histidine biosynthesis; L-histidine from 5-phospho-alpha-D-ribose 1-diphosphate: step 4/9. The protein is 1-(5-phosphoribosyl)-5-[(5-phosphoribosylamino)methylideneamino] imidazole-4-carboxamide isomerase of Nitrosospira multiformis (strain ATCC 25196 / NCIMB 11849 / C 71).